A 420-amino-acid polypeptide reads, in one-letter code: MSGYSPLSSGPADVHIGKAGFFSSVINLANTILGAGILSLPNAFTKTGLLFGCLTIVFSAFASFLGLYFVSQCAARLPRGKASFAAVAKHTFPSLAVVFDASIAVKCFGVAVSYLVIVGDLMPQIAPSLGLSSPMFLRRQTWIVFALFVLTPLSFLKRLDSLRHTSVISLIALCYLVFIVLYHFIIGDTVKGEIRYFVPESGFGYLSVLPVFVFGFTCHQNAFSVINEVRNFSQGFVNFTMFTAIISSTLLYLLVAITGYLSFGSLASGNIIAMYDNTSIWIIGGKLAIVVLVLFSYPLQCHPCRNSVYQAIRRSYSAHDMSDGYHAVITLCILLFTHSLALLLSSLEMVLAFVGSTGSTFISFILPGSLYYFFSHKVASPGNSSPLQLRISRAFAAGLAIYGTVVMILCLNINIAKLSH.

The Cytoplasmic portion of the chain corresponds to 1–19; it reads MSGYSPLSSGPADVHIGKA. The chain crosses the membrane as a helical span at residues 20–40; the sequence is GFFSSVINLANTILGAGILSL. Residues 41–49 are Vacuolar-facing; sequence PNAFTKTGL. The chain crosses the membrane as a helical span at residues 50–70; sequence LFGCLTIVFSAFASFLGLYFV. At 71–96 the chain is on the cytoplasmic side; it reads SQCAARLPRGKASFAAVAKHTFPSLA. Residues 97 to 117 traverse the membrane as a helical segment; that stretch reads VVFDASIAVKCFGVAVSYLVI. Topologically, residues 118–141 are vacuolar; that stretch reads VGDLMPQIAPSLGLSSPMFLRRQT. A helical membrane pass occupies residues 142–162; the sequence is WIVFALFVLTPLSFLKRLDSL. At 163 to 166 the chain is on the cytoplasmic side; it reads RHTS. A helical transmembrane segment spans residues 167–187; the sequence is VISLIALCYLVFIVLYHFIIG. Residues 188 to 195 lie on the Vacuolar side of the membrane; sequence DTVKGEIR. The helical transmembrane segment at 196 to 216 threads the bilayer; that stretch reads YFVPESGFGYLSVLPVFVFGF. Residues 217–240 lie on the Cytoplasmic side of the membrane; the sequence is TCHQNAFSVINEVRNFSQGFVNFT. A helical membrane pass occupies residues 241–261; that stretch reads MFTAIISSTLLYLLVAITGYL. Topologically, residues 262–278 are vacuolar; it reads SFGSLASGNIIAMYDNT. A helical transmembrane segment spans residues 279–299; it reads SIWIIGGKLAIVVLVLFSYPL. Residues 300 to 326 lie on the Cytoplasmic side of the membrane; that stretch reads QCHPCRNSVYQAIRRSYSAHDMSDGYH. Residues 327–347 traverse the membrane as a helical segment; the sequence is AVITLCILLFTHSLALLLSSL. Residues 348–349 lie on the Vacuolar side of the membrane; that stretch reads EM. A helical transmembrane segment spans residues 350-370; the sequence is VLAFVGSTGSTFISFILPGSL. The Cytoplasmic segment spans residues 371 to 394; it reads YYFFSHKVASPGNSSPLQLRISRA. Residues 395-415 traverse the membrane as a helical segment; it reads FAAGLAIYGTVVMILCLNINI. Residues 416 to 420 are Vacuolar-facing; that stretch reads AKLSH.

This sequence belongs to the amino acid/polyamine transporter 2 family.

It is found in the vacuole membrane. Its function is as follows. Vacuolar amino acid transporter involved in the vacuolar uptake of histidine, glutamate, tyrosine, arginine, lysine, and serine. Required for sporulation. The protein is Vacuolar amino acid transporter 5 (avt5) of Schizosaccharomyces pombe (strain 972 / ATCC 24843) (Fission yeast).